Here is a 36-residue protein sequence, read N- to C-terminus: uncharacterized protein (36 aa).

This is an uncharacterized protein from Halalkalibacterium halodurans (strain ATCC BAA-125 / DSM 18197 / FERM 7344 / JCM 9153 / C-125) (Bacillus halodurans).